The chain runs to 531 residues: Peptide chain release factor 3 (531 aa).

A tr-type G domain is found at 11-280; that stretch reads GRRRTFAIIS…AFIRFASRPG (270 aa). GTP-binding positions include 20–27, 88–92, and 142–145; these read SHPDAGKT, DTPGH, and NKLD.

This sequence belongs to the TRAFAC class translation factor GTPase superfamily. Classic translation factor GTPase family. PrfC subfamily.

It localises to the cytoplasm. Increases the formation of ribosomal termination complexes and stimulates activities of RF-1 and RF-2. It binds guanine nucleotides and has strong preference for UGA stop codons. It may interact directly with the ribosome. The stimulation of RF-1 and RF-2 is significantly reduced by GTP and GDP, but not by GMP. The protein is Peptide chain release factor 3 of Gloeobacter violaceus (strain ATCC 29082 / PCC 7421).